Here is a 122-residue protein sequence, read N- to C-terminus: Large ribosomal subunit protein uL14 (122 aa).

Belongs to the universal ribosomal protein uL14 family. In terms of assembly, part of the 50S ribosomal subunit. Forms a cluster with proteins L3 and L19. In the 70S ribosome, L14 and L19 interact and together make contacts with the 16S rRNA in bridges B5 and B8.

In terms of biological role, binds to 23S rRNA. Forms part of two intersubunit bridges in the 70S ribosome. The chain is Large ribosomal subunit protein uL14 from Bacillus subtilis (strain 168).